The primary structure comprises 420 residues: MVKAIRKLSLIQKIMIGIVIGTTLGFLVPEWTFISVLGELFVGALKAIAPILVFVLIIASLAQQKAGAKTYVGSILVVYLLATFLAAVVAVTASYLFPVKIVLEAAQEAQAAPTQLSDVLSNVLTSVVQNPIQAMIEGNYLSVLFWSSLIGIGLRQSSVATKDVIANLSTGITTVVQMIIGIAPIGILGLVFHSVATTGIAGLAKYGQLLLLLIGTMAVVALVVYPAIVFWNIRQNPYPLVFFVLKESAIPAFFTRSSAANIPINMELAKAMDLNEESYAVSIPLGATINMGGAAITITIMTLAAVHTLGMSVPIYLALLLSIIAAVSACGASGIAGGSLLLIPLACSLFGISNDIAMQVVGVGFIVGVVQDSIETALNSSSDLLFTTSVELADRRKNGEIIDVKALIGKSQLVVEQENI.

9 consecutive transmembrane segments (helical) span residues 14 to 34 (IMIG…WTFI), 40 to 60 (LFVG…IIAS), 71 to 91 (YVGS…VVAV), 172 to 192 (ITTV…GLVF), 210 to 230 (LLLL…AIVF), 283 to 303 (IPLG…IMTL), 309 to 329 (LGMS…AVSA), 332 to 352 (ASGI…LFGI), and 356 to 376 (IAMQ…SIET).

The protein belongs to the dicarboxylate/amino acid:cation symporter (DAACS) (TC 2.A.23) family.

Its subcellular location is the cell membrane. The enzyme catalyses L-serine(in) + Na(+)(in) = L-serine(out) + Na(+)(out). The catalysed reaction is L-threonine(in) + Na(+)(in) = L-threonine(out) + Na(+)(out). In terms of biological role, involved in the import of serine and threonine into the cell, with the concomitant import of sodium (symport system). The chain is Serine/threonine transporter SstT from Enterococcus faecalis (strain ATCC 700802 / V583).